The primary structure comprises 545 residues: MFILNNRKWRKLKRDPSAFFRDSKFNFLRYFSAKKFAKNFKNSSHIHKTNISKAQSNISSTLKENRKQDMLIPINFFNFEYIVKKLNNQNAIGVYILPSNLTLKPALCILESHKEDFLNKFLLTISSENLKLQYKFNGQIKNPKSVNEIWTDLFSIAHVDMKLSTDRTLSSSISQFWFRLEFCKEDKDFILFSTANRYSRKLWKHSIKNNQLFKEGIRNYSEISSLPYEEDHNFDIDLVFTWVNSEDKNWQELYKKYKPDFNSDATSTSRFLSRDELKFALRSWEMSGSFIRKIFIVSNCAPPAWLDLNNPKIQWVYHEEIMPQSALPTFSSHAIETSLHHIPGISNYFIYSNDDFLLTKPLNKDNFFYSNGIAKLRLEAWGNVNGECTEGEPDYLNGARNANTLLEKEFKKFTTKLHTHSPQSMRTDILFEMEKKYPEEFNRTLHNKFRSLDDIAVTGYLYHHYALLSGRALQSSDKTELVQQNHDFKKKLNNVVTLTKERNFDKLPLSVCINDGADSHLNEEWNVQVIKFLETLFPLPSSFEK.

This sequence belongs to the stealth family.

Functionally, part of a capsular biosynthesis operon and has been suggested to be the polymerase that links individual UDP-N-acetyl-D-mannosamine monomers. In serotype A the capsule is composed of repeated units of (alpha 1-6)-linked N-acetyl-D-mannosamine-1-phosphate. Non-polar disruption of this open reading frame prevented capsule synthesis. This chain is Capsular polysaccharide phosphotransferase SacB (sacB), found in Neisseria meningitidis serogroup A.